Reading from the N-terminus, the 1359-residue chain is Transcriptional regulator ATRX homolog (1359 aa).

The interval 1–402 (MRVGVSESED…RAEKERRKRL (402 aa)) is disordered. The segment covering 11 to 49 (SDGHVIEDEDLEMARQIENERKEKRAQKLKEKREREGKP) has biased composition (basic and acidic residues). The segment covering 50-61 (PPKKRPAKKRKA) has biased composition (basic residues). Residues 64-73 (SEEDDDDEEE) show a composition bias toward acidic residues. Basic residues-rich tracts occupy residues 77-86 (KSSKKSRKRA), 103-123 (KSKSKKKVDQKKKEKSKKKRT), 139-149 (KSKKKSKKTKK), 165-177 (VKKSKKNKEKSVK), 194-204 (KKSKKGLKKKA), and 219-229 (KKSKKKSKKVV). Residues 257–271 (ESSESEKSDEEEEEK) show a composition bias toward acidic residues. A compositionally biased stretch (basic and acidic residues) spans 321–336 (KDQKSESEASDVEEKV). Residues 347 to 357 (SESGSDSSEGS) are compositionally biased toward low complexity. Residues 362–376 (RKSKKKEKPEKKKKG) show a composition bias toward basic residues. Residues 383–397 (KLQKETIDAERAEKE) are compositionally biased toward basic and acidic residues. Positions 483-685 (DRLDTEGSGG…HCMVNFVKPG (203 aa)) constitute a Helicase ATP-binding domain. Residue 496 to 503 (HCMGLGKT) participates in ATP binding. A DEAH box motif is present at residues 636 to 639 (DEAH). The disordered stretch occupies residues 809–891 (RVMREDAEEE…NSDDEDEEDG (83 aa)). The segment covering 814 to 832 (DAEEEADFIDDGDGSESES) has biased composition (acidic residues). Over residues 833–847 (EGSFKSGSESDSGKS) the composition is skewed to low complexity. A Helicase C-terminal domain is found at 951–1134 (LLVEIIKKCE…EAQIQRHYLG (184 aa)).

It belongs to the SNF2/RAD54 helicase family.

It localises to the nucleus. The catalysed reaction is ATP + H2O = ADP + phosphate + H(+). Required for embryonic development and gonadogenesis. Also, functions redundantly with the transcriptional repressor lin-35 to regulate somatic gonad development. The chain is Transcriptional regulator ATRX homolog from Caenorhabditis elegans.